The sequence spans 181 residues: Crossover junction endodeoxyribonuclease RuvC (181 aa).

Residues D7, E67, and D139 contribute to the active site. The Mg(2+) site is built by D7, E67, and D139.

It belongs to the RuvC family. Homodimer which binds Holliday junction (HJ) DNA. The HJ becomes 2-fold symmetrical on binding to RuvC with unstacked arms; it has a different conformation from HJ DNA in complex with RuvA. In the full resolvosome a probable DNA-RuvA(4)-RuvB(12)-RuvC(2) complex forms which resolves the HJ. The cofactor is Mg(2+).

The protein resides in the cytoplasm. It catalyses the reaction Endonucleolytic cleavage at a junction such as a reciprocal single-stranded crossover between two homologous DNA duplexes (Holliday junction).. The RuvA-RuvB-RuvC complex processes Holliday junction (HJ) DNA during genetic recombination and DNA repair. Endonuclease that resolves HJ intermediates. Cleaves cruciform DNA by making single-stranded nicks across the HJ at symmetrical positions within the homologous arms, yielding a 5'-phosphate and a 3'-hydroxyl group; requires a central core of homology in the junction. The consensus cleavage sequence is 5'-(A/T)TT(C/G)-3'. Cleavage occurs on the 3'-side of the TT dinucleotide at the point of strand exchange. HJ branch migration catalyzed by RuvA-RuvB allows RuvC to scan DNA until it finds its consensus sequence, where it cleaves and resolves the cruciform DNA. This chain is Crossover junction endodeoxyribonuclease RuvC, found in Cupriavidus taiwanensis (strain DSM 17343 / BCRC 17206 / CCUG 44338 / CIP 107171 / LMG 19424 / R1) (Ralstonia taiwanensis (strain LMG 19424)).